We begin with the raw amino-acid sequence, 332 residues long: Ketol-acid reductoisomerase (NADP(+)) (332 aa).

Positions 2 to 182 constitute a KARI N-terminal Rossmann domain; it reads AKIYTDKDVS…GATRAGVIET (181 aa). Residues 25–28, Ser-53, and 83–86 each bind NADP(+); these read YGSQ and DMIQ. The active site involves His-108. Gly-134 serves as a coordination point for NADP(+). The region spanning 183–328 is the KARI C-terminal knotted domain; that stretch reads TFKEETETDL…RSLRDIILRG (146 aa). Mg(2+) is bound by residues Asp-191, Glu-195, Glu-227, and Glu-231. A substrate-binding site is contributed by Ser-252.

Belongs to the ketol-acid reductoisomerase family. Mg(2+) serves as cofactor.

The catalysed reaction is (2R)-2,3-dihydroxy-3-methylbutanoate + NADP(+) = (2S)-2-acetolactate + NADPH + H(+). It catalyses the reaction (2R,3R)-2,3-dihydroxy-3-methylpentanoate + NADP(+) = (S)-2-ethyl-2-hydroxy-3-oxobutanoate + NADPH + H(+). It functions in the pathway amino-acid biosynthesis; L-isoleucine biosynthesis; L-isoleucine from 2-oxobutanoate: step 2/4. Its pathway is amino-acid biosynthesis; L-valine biosynthesis; L-valine from pyruvate: step 2/4. In terms of biological role, involved in the biosynthesis of branched-chain amino acids (BCAA). Catalyzes an alkyl-migration followed by a ketol-acid reduction of (S)-2-acetolactate (S2AL) to yield (R)-2,3-dihydroxy-isovalerate. In the isomerase reaction, S2AL is rearranged via a Mg-dependent methyl migration to produce 3-hydroxy-3-methyl-2-ketobutyrate (HMKB). In the reductase reaction, this 2-ketoacid undergoes a metal-dependent reduction by NADPH to yield (R)-2,3-dihydroxy-isovalerate. The polypeptide is Ketol-acid reductoisomerase (NADP(+)) (Sulfolobus acidocaldarius (strain ATCC 33909 / DSM 639 / JCM 8929 / NBRC 15157 / NCIMB 11770)).